We begin with the raw amino-acid sequence, 82 residues long: Cytochrome c oxidase-assembly factor cox-23, mitochondrial (82 aa).

The tract at residues 1–27 (MAQAGSENKEPWNEETRAKFEGKSRSE) is disordered. Basic and acidic residues predominate over residues 7 to 27 (ENKEPWNEETRAKFEGKSRSE). The region spanning 29 to 71 (LDPCQEAAQRSIRCLHRNQGDRTMCSDYFEAYRECKKQWIERR) is the CHCH domain. Short sequence motifs (cx9C motif) lie at residues 32–42 (CQEAAQRSIRC) and 53–63 (CSDYFEAYREC). Disulfide bonds link C32–C63 and C42–C53.

The protein belongs to the COX23 family.

The protein resides in the mitochondrion intermembrane space. In terms of biological role, required for the assembly of cytochrome c oxidase. This chain is Cytochrome c oxidase-assembly factor cox-23, mitochondrial (cox-23), found in Neurospora crassa (strain ATCC 24698 / 74-OR23-1A / CBS 708.71 / DSM 1257 / FGSC 987).